The sequence spans 279 residues: Estrogen receptor beta (279 aa).

The region spanning 27-261 (SPEQLVLTLL…DLLLEMLNAH (235 aa)) is the NR LBD domain.

This sequence belongs to the nuclear hormone receptor family. NR3 subfamily. Binds DNA as a homodimer. Can form a heterodimer with ESR1. Interacts with NCOA1, NCOA3, NCOA5 and NCOA6 coactivators, leading to a strong increase of transcription of target genes. Interacts with UBE1C and AKAP13. Interacts with DNTTIP2. Interacts with CCDC62 in the presence of estradiol/E2; this interaction seems to enhance the transcription of target genes. Interacts with DNAAF4. Interacts with PRMT2. Interacts with CCAR2 (via N-terminus) in a ligand-independent manner. Interacts with RBM39, in the presence of estradiol (E2). Interacts with STUB1/CHIP.

The protein resides in the nucleus. Nuclear hormone receptor. Binds estrogens with an affinity similar to that of ESR1/ER-alpha, and activates expression of reporter genes containing estrogen response elements (ERE) in an estrogen-dependent manner. The chain is Estrogen receptor beta (ESR2) from Macaca mulatta (Rhesus macaque).